Here is a 140-residue protein sequence, read N- to C-terminus: UPF0251 protein Athe_2281 (140 aa).

Belongs to the UPF0251 family.

The sequence is that of UPF0251 protein Athe_2281 from Caldicellulosiruptor bescii (strain ATCC BAA-1888 / DSM 6725 / KCTC 15123 / Z-1320) (Anaerocellum thermophilum).